Reading from the N-terminus, the 258-residue chain is uncharacterized protein (258 aa).

3 N-linked (GlcNAc...) asparagine; by host glycosylation sites follow: asparagine 60, asparagine 104, and asparagine 113. Low complexity predominate over residues threonine 147–threonine 156. Residues threonine 147–asparagine 183 are disordered. The segment covering leucine 157–lysine 166 has biased composition (polar residues). Over residues histidine 167–threonine 177 the composition is skewed to basic residues. N-linked (GlcNAc...) asparagine; by host glycosylation occurs at asparagine 183. A helical membrane pass occupies residues alanine 208 to phenylalanine 228.

It belongs to the RL11 family.

The protein resides in the membrane. This is an uncharacterized protein from Human cytomegalovirus (strain AD169) (HHV-5).